The following is a 193-amino-acid chain: MTIMIKKSDFLAIPSEEYKGILSLRYQVFKQRLEWDLVVENNLESDEYDNSNAEYIYACDDTENVSGCWRLLPTTGDYMLKSVFPELLGQQSAPKDPNIVELSRFAVGKNSSKINNSASEITMKLFEAIYKHAVSQGITEYVTVTSTAIERFLKRIKVPCHRIGDKEIHVLGDTKSVVLSMPINEQFKKAVLN.

It belongs to the autoinducer synthase family.

The catalysed reaction is a fatty acyl-[ACP] + S-adenosyl-L-methionine = an N-acyl-L-homoserine lactone + S-methyl-5'-thioadenosine + holo-[ACP] + H(+). Its function is as follows. Required for the synthesis of OHHL (N-(3-oxohexanoyl)-L-homoserine lactone) also known as VAI or N-(beta-ketocaproyl)homoserine lactone or 3-oxo-N-(tetrahydro-2-oxo-3-furanyl)-hexanamide, an autoinducer molecule which binds to LuxR and thus acts in bioluminescence regulation. In Aliivibrio fischeri (Vibrio fischeri), this protein is Acyl-homoserine-lactone synthase (luxI).